Reading from the N-terminus, the 217-residue chain is Somatotropin (217 aa).

The first 24 residues, methionine 1–alanine 24, serve as a signal peptide directing secretion. Histidine 44 lines the Zn(2+) pocket. Residues cysteine 79 and cysteine 191 are joined by a disulfide bond. Serine 132 carries the post-translational modification Phosphoserine. Residue glutamate 200 coordinates Zn(2+). Cysteines 208 and 215 form a disulfide.

The protein belongs to the somatotropin/prolactin family.

The protein resides in the secreted. Plays an important role in growth control. Its major role in stimulating body growth is to stimulate the liver and other tissues to secrete IGF1. It stimulates both the differentiation and proliferation of myoblasts. It also stimulates amino acid uptake and protein synthesis in muscle and other tissues. The sequence is that of Somatotropin (GH1) from Callithrix jacchus (White-tufted-ear marmoset).